Here is a 45-residue protein sequence, read N- to C-terminus: MREKVAKNAVESTFRFDITKCKTRYLSRNKGIKWYIENCMIKYKV.

This is an uncharacterized protein from Bacillus subtilis (strain 168).